The following is a 183-amino-acid chain: Phospholipase A2 inhibitor gamma subunit A1 (183 aa).

8 disulfides stabilise this stretch: C3–C28, C6–C13, C21–C49, C55–C76, C77–C82, C100–C125, C118–C147, and C151–C173. N-linked (GlcNAc...) asparagine glycosylation occurs at N158.

Belongs to the CNF-like-inhibitor family. In terms of assembly, heterodimer of subunit A and subunit B. Expressed by the liver.

Its subcellular location is the secreted. Its function is as follows. Phospholipase A2 (PA2) inhibitor. Inhibits the enzymatic activity of PA2 of Deinagkistrodon acutus. Also shows a wide anti-hemorrhage activities to D.acutus, Naja atra and Agkistrodon halys venom. The native protein is more potent than the recombinant one. In Trimerodytes annularis (Red-bellied annulate keelback), this protein is Phospholipase A2 inhibitor gamma subunit A1.